A 655-amino-acid chain; its full sequence is DNA topoisomerase 4 subunit B (655 aa).

ATP contacts are provided by residues Y9, N49, D76, 116 to 122, and K340; that span reads GLHGVGA. Positions 387–397 are enriched in basic and acidic residues; sequence AARKAREEARS. Positions 387-419 are disordered; the sequence is AARKAREEARSGKKRKKSEATLSGKLTPAGSRN. In terms of domain architecture, Toprim spans 423-537; that stretch reads NELYLVEGDS…HGKVFIALPP (115 aa). Positions 429, 502, and 504 each coordinate Mg(2+).

It belongs to the type II topoisomerase family. ParE type 2 subfamily. As to quaternary structure, heterotetramer composed of ParC and ParE. It depends on Mg(2+) as a cofactor. Mn(2+) serves as cofactor. Ca(2+) is required as a cofactor.

The enzyme catalyses ATP-dependent breakage, passage and rejoining of double-stranded DNA.. Functionally, topoisomerase IV is essential for chromosome segregation. It relaxes supercoiled DNA. Performs the decatenation events required during the replication of a circular DNA molecule. The protein is DNA topoisomerase 4 subunit B of Bacillus subtilis (strain 168).